Here is a 359-residue protein sequence, read N- to C-terminus: MEKEKKGARELDLLDIVQFVAPGTPLRAGIENVLRANTGGLIVVGYNDKVKSVVDGGFHINSAFSPAHLYELAKMDGAIILSDSGQKILYANTQLMPDATIHSSETGMRHRTAERVAKQTGCLIIAISERRNVITLYQGNRRYTLKDIGFILTKANQAIQTLEKYKTILDHAISALSALEFEELVTFGDVLSVLHRYEMVLRIKNEINMYIKELGTEGHLIRLQVNELITDMEQEAALFIKDYVKEKIKDPYVLLKQLQDMSSFELLDDSILYKLLGYPASTNIDEYVYTRGYRLLHKIPRLPMPIVENVVEAFGVLDRIMEADVQDLDEVEGIGEVRAKKIKKGLKRLQEKHYIDRQL.

The DAC domain maps to 10–148 (ELDLLDIVQF…GNRRYTLKDI (139 aa)). Residues Gly-77, Leu-95, and 108–112 (MRHRT) contribute to the ATP site.

It belongs to the DisA family. Homooctamer. Mg(2+) is required as a cofactor.

It catalyses the reaction 2 ATP = 3',3'-c-di-AMP + 2 diphosphate. Functionally, participates in a DNA-damage check-point that is active prior to asymmetric division when DNA is damaged. DisA forms globular foci that rapidly scan along the chromosomes during sporulation, searching for lesions. When a lesion is present, DisA pauses at the lesion site. This triggers a cellular response that culminates in a temporary block in sporulation initiation. Also has diadenylate cyclase activity, catalyzing the condensation of 2 ATP molecules into cyclic di-AMP (c-di-AMP). c-di-AMP acts as a signaling molecule that couples DNA integrity with progression of sporulation. The rise in c-di-AMP level generated by DisA while scanning the chromosome, operates as a positive signal that advances sporulation; upon encountering a lesion, the DisA focus arrests at the damaged site and halts c-di-AMP synthesis. This is DNA integrity scanning protein DisA from Bacillus pumilus (strain SAFR-032).